The chain runs to 385 residues: 4-hydroxy-3-methylbut-2-en-1-yl diphosphate synthase (flavodoxin) (385 aa).

The [4Fe-4S] cluster site is built by Cys-282, Cys-285, Cys-317, and Glu-324.

Belongs to the IspG family. Requires [4Fe-4S] cluster as cofactor.

It catalyses the reaction (2E)-4-hydroxy-3-methylbut-2-enyl diphosphate + oxidized [flavodoxin] + H2O + 2 H(+) = 2-C-methyl-D-erythritol 2,4-cyclic diphosphate + reduced [flavodoxin]. It participates in isoprenoid biosynthesis; isopentenyl diphosphate biosynthesis via DXP pathway; isopentenyl diphosphate from 1-deoxy-D-xylulose 5-phosphate: step 5/6. Its function is as follows. Converts 2C-methyl-D-erythritol 2,4-cyclodiphosphate (ME-2,4cPP) into 1-hydroxy-2-methyl-2-(E)-butenyl 4-diphosphate. The protein is 4-hydroxy-3-methylbut-2-en-1-yl diphosphate synthase (flavodoxin) of Nocardia farcinica (strain IFM 10152).